A 416-amino-acid chain; its full sequence is Formyl-CoA:oxalate CoA-transferase (416 aa).

CoA-binding positions include 17-18, Arg38, 72-75, 96-98, His104, and 137-140; these read QS, LNTK, NFH, and KAYE. Asp169 serves as the catalytic Nucleophile. A substrate-binding site is contributed by 248 to 250; that stretch reads GGQ. 273 to 275 contacts CoA; the sequence is QEQ.

This sequence belongs to the CoA-transferase III family. Frc subfamily. Homodimer.

The enzyme catalyses formyl-CoA + oxalate = oxalyl-CoA + formate. Its pathway is metabolic intermediate degradation; oxalate degradation; CO(2) and formate from oxalate: step 1/2. In terms of biological role, involved in the catabolism of oxalate and in the adapatation to low pH via the induction of the oxalate-dependent acid tolerance response (ATR). Catalyzes the transfer of the CoA moiety from formyl-CoA to oxalate. The protein is Formyl-CoA:oxalate CoA-transferase of Shigella sonnei (strain Ss046).